The primary structure comprises 487 residues: N-succinylglutamate 5-semialdehyde dehydrogenase (487 aa).

221-226 (GSSDTG) is an NAD(+) binding site. Residues E244 and C278 contribute to the active site.

It belongs to the aldehyde dehydrogenase family. AstD subfamily.

The enzyme catalyses N-succinyl-L-glutamate 5-semialdehyde + NAD(+) + H2O = N-succinyl-L-glutamate + NADH + 2 H(+). Its pathway is amino-acid degradation; L-arginine degradation via AST pathway; L-glutamate and succinate from L-arginine: step 4/5. Its function is as follows. Catalyzes the NAD-dependent reduction of succinylglutamate semialdehyde into succinylglutamate. The chain is N-succinylglutamate 5-semialdehyde dehydrogenase from Paraburkholderia xenovorans (strain LB400).